The chain runs to 86 residues: Insulin (86 aa).

3 disulfide bridges follow: C7-C72, C19-C85, and C71-C76. The propeptide at 33–63 (EAEDPQVGEVELGGGPGLGGLQPLALAGPQQ) is c peptide.

It belongs to the insulin family. Heterodimer of a B chain and an A chain linked by two disulfide bonds.

Its subcellular location is the secreted. Functionally, insulin decreases blood glucose concentration. It increases cell permeability to monosaccharides, amino acids and fatty acids. It accelerates glycolysis, the pentose phosphate cycle, and glycogen synthesis in liver. This is Insulin (INS) from Equus caballus (Horse).